The sequence spans 459 residues: Putrescine aminotransferase (459 aa).

Pyridoxal 5'-phosphate is bound by residues Gly-150–Thr-151 and Gln-274. Position 300 is an N6-(pyridoxal phosphate)lysine (Lys-300). Thr-332 provides a ligand contact to pyridoxal 5'-phosphate.

It belongs to the class-III pyridoxal-phosphate-dependent aminotransferase family. Putrescine aminotransferase subfamily. Pyridoxal 5'-phosphate is required as a cofactor.

It carries out the reaction an alkane-alpha,omega-diamine + 2-oxoglutarate = an omega-aminoaldehyde + L-glutamate. The catalysed reaction is putrescine + 2-oxoglutarate = 1-pyrroline + L-glutamate + H2O. The enzyme catalyses cadaverine + 2-oxoglutarate = 5-aminopentanal + L-glutamate. It functions in the pathway amine and polyamine degradation; putrescine degradation; 4-aminobutanal from putrescine (transaminase route): step 1/1. In terms of biological role, catalyzes the aminotransferase reaction from putrescine to 2-oxoglutarate, leading to glutamate and 4-aminobutanal, which spontaneously cyclizes to form 1-pyrroline. This is the first step in one of two pathways for putrescine degradation, where putrescine is converted into 4-aminobutanoate (gamma-aminobutyrate or GABA) via 4-aminobutanal. Also functions as a cadaverine transaminase in a a L-lysine degradation pathway to succinate that proceeds via cadaverine, glutarate and L-2-hydroxyglutarate. The polypeptide is Putrescine aminotransferase (Salmonella paratyphi A (strain ATCC 9150 / SARB42)).